The primary structure comprises 328 residues: Acetyl-coenzyme A carboxylase carboxyl transferase subunit alpha (328 aa).

Residues 42–296 (SFKEQLSILK…KESLISELHF (255 aa)) enclose the CoA carboxyltransferase C-terminal domain.

This sequence belongs to the AccA family. In terms of assembly, acetyl-CoA carboxylase is a heterohexamer composed of biotin carboxyl carrier protein (accB), biotin carboxylase (accC) and two subunits each of ACCase subunit alpha (accA) and ACCase subunit beta (accD).

It localises to the plastid. The protein localises to the chloroplast. It catalyses the reaction N(6)-carboxybiotinyl-L-lysyl-[protein] + acetyl-CoA = N(6)-biotinyl-L-lysyl-[protein] + malonyl-CoA. It participates in lipid metabolism; malonyl-CoA biosynthesis; malonyl-CoA from acetyl-CoA: step 1/1. Component of the acetyl coenzyme A carboxylase (ACC) complex. First, biotin carboxylase catalyzes the carboxylation of biotin on its carrier protein (BCCP) and then the CO(2) group is transferred by the carboxyltransferase to acetyl-CoA to form malonyl-CoA. The protein is Acetyl-coenzyme A carboxylase carboxyl transferase subunit alpha of Gracilaria tenuistipitata var. liui (Red alga).